The chain runs to 335 residues: Glyceraldehyde-3-phosphate dehydrogenase (335 aa).

Residues 12-13, Asp-34, and Arg-79 each bind NAD(+); that span reads RI. D-glyceraldehyde 3-phosphate-binding positions include 150–152, Thr-181, 210–211, and Arg-233; these read SCT and TG. Residue Cys-151 is the Nucleophile of the active site. Asn-315 contacts NAD(+).

It belongs to the glyceraldehyde-3-phosphate dehydrogenase family. Homotetramer.

The protein localises to the cytoplasm. It carries out the reaction D-glyceraldehyde 3-phosphate + phosphate + NAD(+) = (2R)-3-phospho-glyceroyl phosphate + NADH + H(+). The protein operates within carbohydrate degradation; glycolysis; pyruvate from D-glyceraldehyde 3-phosphate: step 1/5. This chain is Glyceraldehyde-3-phosphate dehydrogenase (GPD), found in Ogataea parapolymorpha (strain ATCC 26012 / BCRC 20466 / JCM 22074 / NRRL Y-7560 / DL-1) (Yeast).